Here is a 283-residue protein sequence, read N- to C-terminus: MESFKYCFDNDGKKWIIGNTLYSGNSILYKVRKNFTSSFYNYVMKIDHKSHKPLLSEIRFYISVLDPLTIDNWTRERGIKYLAIPDLYGIGETDDYMFFVIKNLGRVFAPKDTESVFEACVTMINTLEFIHSRGFTHGKIEPRNILIRNKRLSLIDYSRTNKLYKSGNSHIDYNEDMITSGNINYMCVDNHLGATVSKRGDLEMLGYCMIEWFGGKLPWKNESSIKVIKQKKEYKKFIATFFEDCFPEGNEPLELVRYIELVYTLDYSQTPNYDRLRRLFIQD.

2 residues coordinate ATP: Met-1 and Lys-30. The region spanning 1–283 (MESFKYCFDN…DRLRRLFIQD (283 aa)) is the Protein kinase domain.

The protein belongs to the protein kinase superfamily. Ser/Thr protein kinase family. Poxviruses subfamily. In terms of assembly, interacts with B1/VPK1. Interacts with host VRK1. Interacts with host VRK2.

The protein resides in the host nucleus. Both catalytically active kinases B1/VPK1 and host VRK2 repress B12 inhibitory activity in a B1/VPK1 deletion mutant strain. In terms of biological role, pseudokinase that plays a role in viral DNA replication repression by activating the antiviral protein BANF1 and inhibiting the activity of host VRK1, a cellular modulator of BANF1. In Vaccinia virus (strain Ankara) (VACV), this protein is Pseudokinase OPG198 (OPG198).